Reading from the N-terminus, the 470-residue chain is Aldehyde dehydrogenase family 3 comG (470 aa).

Gly-196–Gly-201 is an NAD(+) binding site. Residues Glu-218 and Cys-252 contribute to the active site.

The protein belongs to the aldehyde dehydrogenase family.

It is found in the cytoplasm. It carries out the reaction an aldehyde + NADP(+) + H2O = a carboxylate + NADPH + 2 H(+). The catalysed reaction is an aldehyde + NAD(+) + H2O = a carboxylate + NADH + 2 H(+). The protein is Aldehyde dehydrogenase family 3 comG (comG) of Dictyostelium discoideum (Social amoeba).